The sequence spans 190 residues: Ribose 1,5-bisphosphate phosphokinase PhnN (190 aa).

Position 19–26 (19–26) interacts with ATP; it reads GPSGVGKD.

This sequence belongs to the ribose 1,5-bisphosphokinase family.

The catalysed reaction is alpha-D-ribose 1,5-bisphosphate + ATP = 5-phospho-alpha-D-ribose 1-diphosphate + ADP. It functions in the pathway metabolic intermediate biosynthesis; 5-phospho-alpha-D-ribose 1-diphosphate biosynthesis; 5-phospho-alpha-D-ribose 1-diphosphate from D-ribose 5-phosphate (route II): step 3/3. Its function is as follows. Catalyzes the phosphorylation of ribose 1,5-bisphosphate to 5-phospho-D-ribosyl alpha-1-diphosphate (PRPP). This is Ribose 1,5-bisphosphate phosphokinase PhnN from Ruegeria sp. (strain TM1040) (Silicibacter sp.).